Here is a 336-residue protein sequence, read N- to C-terminus: MELHILFFILAGLLIAVLISFSLWSARREKSRIFSNTFSTRPPSTPINNIVSDVPPSLNPQSYAQTTGQHGETEADNPVQIQQEVESSLREIKINLPGQDSAAYQSKVEETPIYSGQPVLPVQPQYQTQVQYQTQPQHIEPAFTQAPQSPIAEATSVLEQSVEELERQAAQGDVDIYSDASVRVELAKNSMQADSVAEQKPVAENNMLTLYVVAPEGQQFRGDYVVQSLEALGFQYGEYQIFHRHQHMGNSASPVIFSVANMMQPGIFDLTKIEHFSTVGLVLFMHLPSEGNDVVNFKLLLKTTENLAQALGGFVLNEHREIFDENSRQSYLARVS.

Residues 1-2 are Periplasmic-facing; that stretch reads ME. Residues 3–23 traverse the membrane as a helical segment; it reads LHILFFILAGLLIAVLISFSL. Topologically, residues 24 to 336 are cytoplasmic; the sequence is WSARREKSRI…SRQSYLARVS (313 aa). Positions 56 to 77 are disordered; that stretch reads PSLNPQSYAQTTGQHGETEADN. A compositionally biased stretch (polar residues) spans 59-70; that stretch reads NPQSYAQTTGQH.

It belongs to the ZipA family. As to quaternary structure, interacts with FtsZ via their C-terminal domains.

Its subcellular location is the cell inner membrane. In terms of biological role, essential cell division protein that stabilizes the FtsZ protofilaments by cross-linking them and that serves as a cytoplasmic membrane anchor for the Z ring. Also required for the recruitment to the septal ring of downstream cell division proteins. This Actinobacillus pleuropneumoniae serotype 3 (strain JL03) protein is Cell division protein ZipA.